Reading from the N-terminus, the 63-residue chain is MKMRTHSGAKKRLKVLSSGKVKKKSTRMRHLNSHMSSKTKRQLGKTSYVEDANMLQVRRCLVF.

Over residues 1-43 the composition is skewed to basic residues; sequence MKMRTHSGAKKRLKVLSSGKVKKKSTRMRHLNSHMSSKTKRQL. The tract at residues 1 to 45 is disordered; that stretch reads MKMRTHSGAKKRLKVLSSGKVKKKSTRMRHLNSHMSSKTKRQLGK.

It belongs to the bacterial ribosomal protein bL35 family.

The chain is Large ribosomal subunit protein bL35 from Bdellovibrio bacteriovorus (strain ATCC 15356 / DSM 50701 / NCIMB 9529 / HD100).